Consider the following 327-residue polypeptide: E3 ubiquitin-protein ligase SINAT4 (327 aa).

Positions 1 to 27 (METDSMECVSSTGNEIHQNGNGHQSYQ) are disordered. A compositionally biased stretch (polar residues) spans 8-27 (CVSSTGNEIHQNGNGHQSYQ). Residues 64-100 (CPVCTYSMYPPIHQCHNGHTLCSTCKVRVHNRCPTCR) form an RING-type zinc finger. Positions 114-307 (VAESLELPCK…KELKLRVTGK (194 aa)) are SBD. The SIAH-type zinc finger occupies 117–177 (SLELPCKFYN…LVAHLRDDHK (61 aa)). C122, C129, H141, C145, C152, C159, H171, and H176 together coordinate Zn(2+).

This sequence belongs to the SINA (Seven in absentia) family. In terms of assembly, interacts with SINAT6. Interacts with WAV3. Interacts with FREE1. Interacts with ELC/VPS23A.

The protein localises to the endosome. The protein resides in the multivesicular body. Its subcellular location is the cytoplasmic vesicle. It is found in the autophagosome. It catalyses the reaction S-ubiquitinyl-[E2 ubiquitin-conjugating enzyme]-L-cysteine + [acceptor protein]-L-lysine = [E2 ubiquitin-conjugating enzyme]-L-cysteine + N(6)-ubiquitinyl-[acceptor protein]-L-lysine.. The protein operates within protein modification; protein ubiquitination. Functionally, E3 ubiquitin-protein ligase that mediates ubiquitination and subsequent proteasomal degradation of target proteins. E3 ubiquitin ligases accept ubiquitin from an E2 ubiquitin-conjugating enzyme in the form of a thioester and then directly transfers the ubiquitin to targeted substrates. It probably triggers the ubiquitin-mediated degradation of different substrates. Modulates directly the ubiquitination and proteasomal-dependent degradation of FREE1, a component of the ESCRT-I complex. Modulates directly the ubiquitination and proteasomal-dependent degradation of ELC/VPS23A, a component of the ESCRT-I complex. The chain is E3 ubiquitin-protein ligase SINAT4 from Arabidopsis thaliana (Mouse-ear cress).